We begin with the raw amino-acid sequence, 917 residues long: Smoothelin (917 aa).

Position 2 is an N-acetylalanine (Ala2). Residues Leu24–Met89 are a coiled coil. The segment at Glu157–Ser456 is disordered. The span at Pro177–Thr188 shows a compositional bias: polar residues. Low complexity-rich tracts occupy residues Ala193–Thr210 and Pro220–Gly232. Residues Ser233–Thr243 are compositionally biased toward pro residues. Over residues Thr244–Glu258 the composition is skewed to low complexity. Polar residues predominate over residues Arg298–Arg326. A phosphoserine mark is found at Ser299, Ser301, and Ser304. The segment covering Ser329–Thr338 has biased composition (basic and acidic residues). At Ser341 the chain carries Phosphoserine. Position 351 is a phosphothreonine (Thr351). The residue at position 357 (Ser357) is a Phosphoserine. Phosphothreonine is present on residues Thr360 and Thr373. Residues Arg363–Arg392 are compositionally biased toward low complexity. Phosphoserine is present on residues Ser503, Ser514, Ser523, and Ser576. Disordered regions lie at residues Ala560–Ala580 and Gln617–Met767. Positions Glu603–Arg630 form a coiled coil. Positions Gln617–Glu640 are enriched in basic and acidic residues. The segment covering Asn676 to Ser689 has biased composition (polar residues). The segment covering Ser701–Ser720 has biased composition (low complexity). Ser729 carries the phosphoserine modification. The segment covering Leu738–Met750 has biased composition (basic and acidic residues). The residue at position 792 (Ser792) is a Phosphoserine. Residues Asn799–Arg906 form the Calponin-homology (CH) domain.

Belongs to the smoothelin family. Smooth muscle; contractile or vascular (for the long form).

The protein localises to the cytoplasm. Its subcellular location is the cytoskeleton. Its function is as follows. Structural protein of the cytoskeleton. The sequence is that of Smoothelin (SMTN) from Homo sapiens (Human).